We begin with the raw amino-acid sequence, 430 residues long: C4-dicarboxylate transport protein (430 aa).

8 consecutive transmembrane segments (helical) span residues 9–29 (VLYV…HFYP), 45–65 (LIKM…IAGM), 79–99 (LLYF…ATHL), 149–169 (GEIL…AHLG), 185–205 (VLFG…FGAM), 223–243 (LIGT…GAIA), 308–328 (IYMT…LTWM), and 356–376 (AATL…ILGI).

Belongs to the dicarboxylate/amino acid:cation symporter (DAACS) (TC 2.A.23) family.

It is found in the cell inner membrane. Functionally, responsible for the transport of dicarboxylates such as succinate, fumarate, and malate from the periplasm across the membrane. This chain is C4-dicarboxylate transport protein, found in Burkholderia orbicola (strain MC0-3).